We begin with the raw amino-acid sequence, 334 residues long: N-acetyl-gamma-glutamyl-phosphate reductase (334 aa).

Cys154 is an active-site residue.

This sequence belongs to the NAGSA dehydrogenase family. Type 1 subfamily.

The protein resides in the cytoplasm. The catalysed reaction is N-acetyl-L-glutamate 5-semialdehyde + phosphate + NADP(+) = N-acetyl-L-glutamyl 5-phosphate + NADPH + H(+). It functions in the pathway amino-acid biosynthesis; L-arginine biosynthesis; N(2)-acetyl-L-ornithine from L-glutamate: step 3/4. In terms of biological role, catalyzes the NADPH-dependent reduction of N-acetyl-5-glutamyl phosphate to yield N-acetyl-L-glutamate 5-semialdehyde. The sequence is that of N-acetyl-gamma-glutamyl-phosphate reductase from Salmonella typhimurium (strain LT2 / SGSC1412 / ATCC 700720).